The chain runs to 74 residues: Veswaprin-a (74 aa).

The first 24 residues, 1–24 (MSSGGLLLLLGLLTLWAEVTPISG), serve as a signal peptide directing secretion. One can recognise a WAP domain in the interval 27–71 (RPKKPGLCPPRPQKPCVKECKNDWSCPGQQKCCNYGCIDECRDPI). 4 disulfide bridges follow: C34-C59, C42-C63, C46-C58, and C52-C67.

This sequence belongs to the venom waprin family. As to expression, expressed by the venom gland.

The protein localises to the secreted. Functionally, damages membranes of susceptible bacteria. Has no hemolytic activity. Not toxic to mice. Does not inhibit the proteinases elastase and cathepsin G. The polypeptide is Veswaprin-a (Demansia vestigiata (Lesser black whip snake)).